A 1235-amino-acid polypeptide reads, in one-letter code: ATP-dependent helicase/nuclease subunit A (1235 aa).

One can recognise a UvrD-like helicase ATP-binding domain in the interval 12 to 482; it reads SLWTDDQWKA…IDLSQNFRSR (471 aa). Residue 33-40 participates in ATP binding; sequence AAAGSGKT. A UvrD-like helicase C-terminal domain is found at 509–800; that stretch reads AAELTLGAKS…RMMTIHASKG (292 aa).

Belongs to the helicase family. AddA subfamily. As to quaternary structure, heterodimer of AddA and AddB/RexB. Mg(2+) is required as a cofactor.

It carries out the reaction Couples ATP hydrolysis with the unwinding of duplex DNA by translocating in the 3'-5' direction.. The catalysed reaction is ATP + H2O = ADP + phosphate + H(+). Its function is as follows. The heterodimer acts as both an ATP-dependent DNA helicase and an ATP-dependent, dual-direction single-stranded exonuclease. Recognizes the chi site generating a DNA molecule suitable for the initiation of homologous recombination. The AddA nuclease domain is required for chi fragment generation; this subunit has the helicase and 3' -&gt; 5' nuclease activities. This Listeria monocytogenes serotype 4a (strain HCC23) protein is ATP-dependent helicase/nuclease subunit A.